A 45-amino-acid chain; its full sequence is Large ribosomal subunit protein bL34 (45 aa).

The disordered stretch occupies residues 1 to 45 (MTKRTFGGTSRKRKRVSGFRVRMRSHTGRRVIRTRRKRGRSRLAA). Residues 10-45 (SRKRKRVSGFRVRMRSHTGRRVIRTRRKRGRSRLAA) are compositionally biased toward basic residues.

This sequence belongs to the bacterial ribosomal protein bL34 family.

The sequence is that of Large ribosomal subunit protein bL34 from Synechococcus sp. (strain CC9311).